The chain runs to 245 residues: Extracellular protein ARB_04177 (245 aa).

Its subcellular location is the secreted. This Arthroderma benhamiae (strain ATCC MYA-4681 / CBS 112371) (Trichophyton mentagrophytes) protein is Extracellular protein ARB_04177.